The sequence spans 414 residues: Na(+)/H(+) antiporter NhaA (414 aa).

The next 11 helical transmembrane spans lie at 22–42, 61–81, 101–121, 131–151, 171–191, 215–235, 239–259, 281–301, 308–328, 343–363, and 379–399; these read VGGF…NSPF, LHLT…FFVV, MLPI…YAAF, GWGI…AVVG, LGAI…LPLI, SAAL…WALV, GVHA…VPLA, VLPV…LGAV, LGII…GSWV, WIDI…SLLI, and KAGV…VLAV.

The protein belongs to the NhaA Na(+)/H(+) (TC 2.A.33) antiporter family.

The protein localises to the cell membrane. The enzyme catalyses Na(+)(in) + 2 H(+)(out) = Na(+)(out) + 2 H(+)(in). Functionally, na(+)/H(+) antiporter that extrudes sodium in exchange for external protons. The sequence is that of Na(+)/H(+) antiporter NhaA from Thermobifida fusca (strain YX).